The following is a 680-amino-acid chain: Serine/threonine-protein kinase YPK1 (680 aa).

Residues 1–11 (MYSWKSKFKFG) are compositionally biased toward basic residues. Residues 1–117 (MYSWKSKFKF…GTPNDATSSS (117 aa)) form a disordered region. 2 stretches are compositionally biased toward basic and acidic residues: residues 12–21 (KSKEEKEAKH) and 41–56 (GEHD…DRKG). Residue threonine 57 is modified to Phosphothreonine. Residues 59-71 (NPSNSSVVPVRVS) show a composition bias toward low complexity. Serine 61, serine 64, and serine 71 each carry phosphoserine. Over residues 73-83 (DASSSTSTVRD) the composition is skewed to polar residues. Over residues 84 to 97 (SNGGNSENTNSSQN) the composition is skewed to low complexity. A compositionally biased stretch (polar residues) spans 98–117 (LDETANIGSTGTPNDATSSS). The residue at position 170 (serine 170) is a Phosphoserine. The 256-residue stretch at 347–602 (FDLLKVIGKG…ADEIRNHPFF (256 aa)) folds into the Protein kinase domain. Residues 353–361 (IGKGSFGKV) and lysine 376 contribute to the ATP site. The active-site Proton acceptor is the aspartate 470. At threonine 502 the chain carries Phosphothreonine. Threonine 504 bears the Phosphothreonine; by PKH1 mark. One can recognise an AGC-kinase C-terminal domain in the interval 603–673 (SQLSWKRLLM…VGNEQLGSSM (71 aa)). A phosphoserine mark is found at serine 644 and serine 653. Residue threonine 662 is modified to Phosphothreonine; by PKH1. Serine 671 is modified (phosphoserine).

Belongs to the protein kinase superfamily. AGC Ser/Thr protein kinase family. RAC subfamily. In terms of processing, autophosphorylated. Phytosphingosine level stimulates phosphorylation by PKH1. The N-terminal half is phosphorylated by FPK1. Phosphorylation is inhibited by exogenous addition of phytosphingosine.

It is found in the cytoplasm. Its subcellular location is the cell membrane. It carries out the reaction L-seryl-[protein] + ATP = O-phospho-L-seryl-[protein] + ADP + H(+). It catalyses the reaction L-threonyl-[protein] + ATP = O-phospho-L-threonyl-[protein] + ADP + H(+). Its activity is regulated as follows. Activated by phytosphingosine (PHS), a sphingoid long chain base. Activated by PKH1 phosphorylation. In terms of biological role, plays an essential role in the proliferation of yeast cells. Involved in a signaling pathway, required for optimal cell wall integrity, that acts in parallel with the PKC1-SLT2-dependent pathway. Downstream kinase in the sphingolipid-mediated signaling pathway. Phosphorylation is regulated by the intracellular sphingolipid concentration. Disruption or inhibition of sphingolipid synthesis leads to the activation and phosphorylation of YPK1 through the TORC2 and PKH1 pathways, which in turn phosphorylates ORM1 and LAG1 to activate sphingolipid synthesis. Cooperates with SLI1 in mediating resistance to the sphingolipid biosynthesis inhibitor drug myriocin (ISP-1); kinase activity is essential for the resistance. Required for both receptor-mediated and fluid-phase endocytosis, but is not necessary for receptor phosphorylation or ubiquitination. Necessary for the internalization of plasma membrane proteins carrying different types of internalization signals. Acts downstream of the PKH kinases to control endocytosis by phosphorylating components of the endocytic machinery. Phosphorylation of residue Thr-504 in the activation loop and residue Thr-662 are essential for activity. Phosphorylates and down-regulates flippase activator FPK1. The polypeptide is Serine/threonine-protein kinase YPK1 (YPK1) (Saccharomyces cerevisiae (strain ATCC 204508 / S288c) (Baker's yeast)).